Reading from the N-terminus, the 138-residue chain is Acyl carrier protein 1, chloroplastic (138 aa).

The N-terminal 56 residues, 1–56 (MASLSATTTVRVQPSSSSLHKLSQGNGRCSSIVCLDWGKSSFPTLRTSRRRSFISA), are a transit peptide targeting the chloroplast. In terms of domain architecture, Carrier spans 59–134 (KETIDKVCDI…QAADVIESLL (76 aa)). An O-(pantetheine 4'-phosphoryl)serine modification is found at S94.

It belongs to the acyl carrier protein (ACP) family. In terms of processing, 4'-phosphopantetheine is transferred from CoA to a specific serine of apo-ACP by acpS. This modification is essential for activity because fatty acids are bound in thioester linkage to the sulfhydryl of the prosthetic group.

It is found in the plastid. The protein localises to the chloroplast. The protein operates within lipid metabolism; fatty acid biosynthesis. Functionally, carrier of the growing fatty acid chain in fatty acid biosynthesis. This is Acyl carrier protein 1, chloroplastic (ACL1.1) from Spinacia oleracea (Spinach).